A 473-amino-acid polypeptide reads, in one-letter code: MAP kinase-activated protein kinase 5 (473 aa).

The 283-residue stretch at 22–304 (INWTQKLGAG…IEGVLDHPWL (283 aa)) folds into the Protein kinase domain. ATP is bound by residues 28–36 (LGAGISGPV) and Lys51. Residue Ser115 is modified to Phosphoserine; by PKA. The Proton acceptor role is filled by Asp148. Thr182 carries the post-translational modification Phosphothreonine; by MAPK11, MAPK14, MAPK4, MAPK6 and PKA. Phosphoserine occurs at positions 212 and 354. The stretch at 409-440 (ENEDEKLNEVMQEAWKYNRECKLLRDTLQSFS) forms a coiled coil.

This sequence belongs to the protein kinase superfamily. CAMK Ser/Thr protein kinase family. As to quaternary structure, interacts with ERK3/MAPK6 and ERK4/MAPK4 (via FRIEDE motif); the interaction is direct. Interacts with YWHAE; the interaction prevents phosphorylation of HSP27/HSPB1 leading to disrupt F-actin polymerization. Interacts with SQSTM1. Post-translationally, phosphorylated on Thr-182 ERK3/MAPK6 or ERK4/MAPK4; which is the regulatory phosphorylation site and is located on the T-loop/loop 12, leading to activation. Phosphorylation at Thr-182 by p38-alpha/MAPK14, p38-beta/MAPK11 is subject to debate. Phosphorylated at Ser-115 by PKA/PRKACA, leading to localization to the cytoplasm. Autophosphorylated. In terms of tissue distribution, expressed ubiquitously.

The protein resides in the cytoplasm. The protein localises to the nucleus. The catalysed reaction is L-seryl-[protein] + ATP = O-phospho-L-seryl-[protein] + ADP + H(+). It carries out the reaction L-threonyl-[protein] + ATP = O-phospho-L-threonyl-[protein] + ADP + H(+). Its activity is regulated as follows. Activated following phosphorylation at Thr-182 by p38-alpha/MAPK14, p38-beta/MAPK11, ERK2/MAPK1, ERK3/MAPK6, and ERK4/MAPK4. Activated by stress-related extracellular stimuli; such as H(2)O(2), arsenite, anisomycin TNF alpha and also PMA and the calcium ionophore A23187; but to a lesser extent. In vitro, activated by SQSTM1. Inhibited by diterpenoid alkaloid noroxoaconitine. Tumor suppressor serine/threonine-protein kinase involved in mTORC1 signaling and post-transcriptional regulation. Phosphorylates FOXO3, ERK3/MAPK6, ERK4/MAPK4, HSP27/HSPB1, p53/TP53 and RHEB. Acts as a tumor suppressor by mediating Ras-induced senescence and phosphorylating p53/TP53. Involved in post-transcriptional regulation of MYC by mediating phosphorylation of FOXO3: phosphorylation of FOXO3 leads to promote nuclear localization of FOXO3, enabling expression of miR-34b and miR-34c, 2 post-transcriptional regulators of MYC that bind to the 3'UTR of MYC transcript and prevent MYC translation. Acts as a negative regulator of mTORC1 signaling by mediating phosphorylation and inhibition of RHEB. Part of the atypical MAPK signaling via its interaction with ERK3/MAPK6 or ERK4/MAPK4: the precise role of the complex formed with ERK3/MAPK6 or ERK4/MAPK4 is still unclear, but the complex follows a complex set of phosphorylation events: upon interaction with atypical MAPK (ERK3/MAPK6 or ERK4/MAPK4), ERK3/MAPK6 (or ERK4/MAPK4) is phosphorylated and then mediates phosphorylation and activation of MAPKAPK5, which in turn phosphorylates ERK3/MAPK6 (or ERK4/MAPK4). Mediates phosphorylation of HSP27/HSPB1 in response to PKA/PRKACA stimulation, inducing F-actin rearrangement. In Homo sapiens (Human), this protein is MAP kinase-activated protein kinase 5 (MAPKAPK5).